The primary structure comprises 119 residues: Transcription and mRNA export factor SUS1 (119 aa).

The protein belongs to the ENY2 family. As to quaternary structure, component of the nuclear pore complex (NPC)-associated TREX-2 complex (transcription and export complex 2), composed of at least SUS1, SAC3, THP1, SEM1, and CDC31. TREX-2 contains 2 SUS1 chains. The TREX-2 complex interacts with the nucleoporin NUP1. Component of the 1.8 MDa SAGA transcription coactivator-HAT complex. SAGA is built of 5 distinct domains with specialized functions. Within the SAGA complex, SUS1, SGF11, SGF73 and UBP8 form an additional subcomplex of SAGA called the DUB module (deubiquitination module). Interacts directly with THP1, SAC3, SGF11, and with the RNA polymerase II.

The protein localises to the nucleus. It is found in the nucleoplasm. Its subcellular location is the cytoplasm. The protein resides in the P-body. Functionally, involved in mRNA export coupled transcription activation by association with both the TREX-2 and the SAGA complexes. At the promoters, SAGA is required for recruitment of the basal transcription machinery. It influences RNA polymerase II transcriptional activity through different activities such as TBP interaction and promoter selectivity, interaction with transcription activators, and chromatin modification through histone acetylation and deubiquitination. Within the SAGA complex, participates in a subcomplex required for deubiquitination of H2B and for the maintenance of steady-state H3 methylation levels. The TREX-2 complex functions in docking export-competent ribonucleoprotein particles (mRNPs) to the nuclear entrance of the nuclear pore complex (nuclear basket). TREX-2 participates in mRNA export and accurate chromatin positioning in the nucleus by tethering genes to the nuclear periphery. May also be involved in cytoplasmic mRNA decay by interaction with components of P-bodies. This is Transcription and mRNA export factor SUS1 from Candida albicans (strain SC5314 / ATCC MYA-2876) (Yeast).